A 322-amino-acid polypeptide reads, in one-letter code: tRNA U34 carboxymethyltransferase (322 aa).

Carboxy-S-adenosyl-L-methionine contacts are provided by residues Lys-92, Trp-106, Lys-111, Gly-131, 153 to 155 (DPT), 181 to 182 (VE), Met-196, Tyr-200, and Arg-315.

The protein belongs to the class I-like SAM-binding methyltransferase superfamily. CmoB family. Homotetramer.

It carries out the reaction carboxy-S-adenosyl-L-methionine + 5-hydroxyuridine(34) in tRNA = 5-carboxymethoxyuridine(34) in tRNA + S-adenosyl-L-homocysteine + H(+). Functionally, catalyzes carboxymethyl transfer from carboxy-S-adenosyl-L-methionine (Cx-SAM) to 5-hydroxyuridine (ho5U) to form 5-carboxymethoxyuridine (cmo5U) at position 34 in tRNAs. The polypeptide is tRNA U34 carboxymethyltransferase (Colwellia psychrerythraea (strain 34H / ATCC BAA-681) (Vibrio psychroerythus)).